A 1391-amino-acid polypeptide reads, in one-letter code: DNA-directed RNA polymerase subunit beta' (1391 aa).

Zn(2+) contacts are provided by Cys72, Cys74, Cys87, and Cys90. Positions 462, 464, and 466 each coordinate Mg(2+). The Zn(2+) site is built by Cys816, Cys890, Cys897, and Cys900.

It belongs to the RNA polymerase beta' chain family. In terms of assembly, the RNAP catalytic core consists of 2 alpha, 1 beta, 1 beta' and 1 omega subunit. When a sigma factor is associated with the core the holoenzyme is formed, which can initiate transcription. Mg(2+) is required as a cofactor. Zn(2+) serves as cofactor.

It carries out the reaction RNA(n) + a ribonucleoside 5'-triphosphate = RNA(n+1) + diphosphate. In terms of biological role, DNA-dependent RNA polymerase catalyzes the transcription of DNA into RNA using the four ribonucleoside triphosphates as substrates. The chain is DNA-directed RNA polymerase subunit beta' from Neisseria meningitidis serogroup C / serotype 2a (strain ATCC 700532 / DSM 15464 / FAM18).